Reading from the N-terminus, the 309-residue chain is Putative F-box protein At4g05475 (309 aa).

The disordered stretch occupies residues 1 to 26 (MATSTTLQSLLMKEDEEQRNKRRTTS). The F-box domain occupies 37 to 84 (RINWVDLPPELTTSILLRLSVTDILDNARKLCRAWRRICKDPSMWRKI).

This chain is Putative F-box protein At4g05475, found in Arabidopsis thaliana (Mouse-ear cress).